Reading from the N-terminus, the 983-residue chain is Type IV secretion system protein CagE (983 aa).

Position 597–604 (597–604) interacts with ATP; sequence GSTGSGKT.

It belongs to the TrbE/VirB4 family. Component of the Cag type IV secretion system, which is composed of a wheel-shaped outer membrane complex (OMC) and an inner membrane complex (IMC). Interacts with CagV and CagBeta.

The protein resides in the cell inner membrane. The enzyme catalyses ATP + H2O + cellular proteinSide 1 = ADP + phosphate + cellular proteinSide 2.. Its function is as follows. ATPase component of the type IV secretion system Cag (Cag-T4SS). Acts as a molecular motor to provide the energy that is required for the export of proteins. Required for CagA translocation and induction of IL-8 in host gastric epithelial cells. Plays a key role in Cag-T4SS pilus biogenesis, especially in the localization and stabilization of the pilus-associated components CagI, CagL and the surface protein CagH. Is also critical for assembly of the entire cytoplasmic portion of the Cag inner membrane complex (IMC). The protein is Type IV secretion system protein CagE of Helicobacter pylori (strain ATCC 700392 / 26695) (Campylobacter pylori).